Consider the following 428-residue polypeptide: AA14 family lytic polysaccharide monooxygenase A (428 aa).

An N-terminal signal peptide occupies residues 1-21 (MLRSLPASLALVAAFASKASA). N-linked (GlcNAc...) asparagine glycosylation is found at N34 and N52. 5 disulfide bridges follow: C88–C112, C131–C158, C174–C179, C181–C203, and C223–C239. N-linked (GlcNAc...) asparagine glycosylation is present at N155. 2 disordered regions span residues 216–239 (KPAV…PGNC) and 292–428 (SSGT…HNAH). Positions 223-232 (CGADPDHGKP) are enriched in basic and acidic residues. An N-linked (GlcNAc...) asparagine glycan is attached at N238. The span at 292–379 (SSGTGSSPTS…SVATEASSSP (88 aa)) shows a compositional bias: low complexity. Positions 380–402 (IASTTVDEAVVSSSTVGSINPTR) are enriched in polar residues. A compositionally biased stretch (basic residues) spans 414–428 (QKKKRKHARHLHNAH).

The cofactor is Cu(2+).

It is found in the secreted. In terms of biological role, lytic polysaccharide monooxygenase (LPMO) showing oxidase and peroxidase activities that are common for LPMOs. Catalysis by LPMOs requires the reduction of the active-site copper from Cu(II) to Cu(I) by a reducing agent and H(2)O(2) or O(2) as a cosubstrate. Shows no activity on cellulose-associated xylan or any other tested polysaccharide substrate, meaning that the substrate rremains unknown. This chain is AA14 family lytic polysaccharide monooxygenase A, found in Trametes coccinea (strain BRFM310) (Pycnoporus coccineus).